The following is a 181-amino-acid chain: ATP synthase subunit b (181 aa).

A helical transmembrane segment spans residues 24-44 (LFPNLPNFIAHLLATIVLVIV).

The protein belongs to the ATPase B chain family. F-type ATPases have 2 components, F(1) - the catalytic core - and F(0) - the membrane proton channel. F(1) has five subunits: alpha(3), beta(3), gamma(1), delta(1), epsilon(1). F(0) has three main subunits: a(1), b(2) and c(10-14). The alpha and beta chains form an alternating ring which encloses part of the gamma chain. F(1) is attached to F(0) by a central stalk formed by the gamma and epsilon chains, while a peripheral stalk is formed by the delta and b chains.

It localises to the cell membrane. In terms of biological role, f(1)F(0) ATP synthase produces ATP from ADP in the presence of a proton or sodium gradient. F-type ATPases consist of two structural domains, F(1) containing the extramembraneous catalytic core and F(0) containing the membrane proton channel, linked together by a central stalk and a peripheral stalk. During catalysis, ATP synthesis in the catalytic domain of F(1) is coupled via a rotary mechanism of the central stalk subunits to proton translocation. Functionally, component of the F(0) channel, it forms part of the peripheral stalk, linking F(1) to F(0). This chain is ATP synthase subunit b, found in Mycoplasma capricolum subsp. capricolum (strain California kid / ATCC 27343 / NCTC 10154).